The chain runs to 65 residues: UPF0434 protein BRADO0313 (65 aa).

Belongs to the UPF0434 family.

This is UPF0434 protein BRADO0313 from Bradyrhizobium sp. (strain ORS 278).